A 626-amino-acid chain; its full sequence is Basic helix-loop-helix ARNT-like protein 1 (626 aa).

Positions 1–58 are disordered; sequence MADQRMDISSTISDFMSPGPTDLLSSSLGTSGVDCNRKRKGSATDYQESMDTDKDDPH. S17 is modified (phosphoserine; by GSK3-beta). A compositionally biased stretch (low complexity) spans 17–32; it reads SPGPTDLLSSSLGTSG. The residue at position 21 (T21) is a Phosphothreonine; by GSK3-beta. Residues 36–41 carry the Nuclear localization signal motif; it reads NRKRKG. The region spanning 72 to 125 is the bHLH domain; sequence NAREAHSQIEKRRRDKMNSFIDELASLVPTCNAMSRKLDKLTVLRMAVQHMKTL. At S78 the chain carries Phosphoserine. Phosphoserine; by CK2 is present on S90. Positions 142 to 152 match the Nuclear export signal 1 motif; the sequence is LSDDELKHLIL. The PAS 1 domain maps to 143 to 215; that stretch reads SDDELKHLIL…EQLSSSDTAP (73 aa). Residue K252 forms a Glycyl lysine isopeptide (Lys-Gly) (interchain with G-Cter in SUMO2 and SUMO3) linkage. A Glycyl lysine isopeptide (Lys-Gly) (interchain with G-Cter in SUMO); alternate cross-link involves residue K259. K259 is covalently cross-linked (Glycyl lysine isopeptide (Lys-Gly) (interchain with G-Cter in SUMO2); alternate). The region spanning 326–396 is the PAS 2 domain; it reads PQPVNGEIRV…ECHRQVLQTR (71 aa). Residues 361-369 carry the Nuclear export signal 2 motif; the sequence is LAYLPQELL. The PAC domain maps to 401 to 444; the sequence is TNCYKFKIKDGSFITLRSRWFSFMNPWTKEVEYIVSTNTVVLAN. 2 disordered regions span residues 459 to 492 and 511 to 595; these read SPHS…RAGA and GSSP…SPSN. The segment at 508–588 is interaction with CIART; it reads RIRGSSPSSC…IGIDMIDNDQ (81 aa). Residues 511-521 are compositionally biased toward low complexity; the sequence is GSSPSSCGSSP. Residue K538 is modified to N6-acetyllysine.

As to quaternary structure, component of the circadian clock oscillator which includes the CRY1/2 proteins, CLOCK or NPAS2, BMAL1 or BMAL2, CSNK1D and/or CSNK1E, TIMELESS and the PER1/2/3 proteins. Forms a heterodimer with CLOCK. The CLOCK-BMAL1 heterodimer is required for E-box-dependent transactivation, for CLOCK nuclear translocation and degradation, and, for phosphorylation of both CLOCK and BMAL1. Part of a nuclear complex which also includes RACK1 and PRKCA; RACK1 and PRKCA are recruited to the complex in a circadian manner. Interacts with NPAS2. Interacts with EZH2. Interacts with SUMO3. Interacts with SIRT1. Interacts with AHR. Interacts with ID1, ID2 and ID3. Interacts with DDX4. Interacts with OGT. Interacts with EED and SUZ12. Interacts with MTA1. Interacts with CIART. Interacts with HSP90. Interacts with KAT2B and EP300. Interacts with BHLHE40/DEC1 and BHLHE41/DEC2. Interacts with RELB and the interaction is enhanced in the presence of CLOCK. Interacts with PER1, PER2, CRY1 and CRY2 and this interaction requires a translocation to the nucleus. Interaction of the CLOCK-BMAL1 heterodimer with PER or CRY inhibits transcription activation. Interaction of the CLOCK-BMAL1 with CRY1 is independent of DNA but with PER2 is off DNA. The CLOCK-BMAL1 heterodimer interacts with GSK3B. Interacts with KDM5A. Interacts with KMT2A; in a circadian manner. Interacts with UBE3A. Interacts with PRKCG. Interacts with MAGEL2. Interacts with NCOA2. Interacts with THRAP3. The CLOCK-BMAL1 heterodimer interacts with PASD1. Interacts with PASD1. Interacts with USP9X. Interacts with PIWIL2 (via PIWI domain). Interacts with HDAC3. Interacts with HNF4A. Post-translationally, ubiquitinated, leading to its proteasomal degradation. Deubiquitinated by USP9X. In terms of processing, O-glycosylated; contains O-GlcNAc. O-glycosylation by OGT prevents protein degradation by inhibiting ubiquitination. It also stabilizes the CLOCK-BMAL1 heterodimer thereby increasing CLOCK-BMAL1-mediated transcription of genes in the negative loop of the circadian clock such as PER1/2/3 and CRY1/2. Acetylated on Lys-538 by CLOCK during the repression phase of the circadian cycle. Acetylation facilitates recruitment of CRY1 protein and initiates the repression phase of the circadian cycle. Acetylated at Lys-538 by KAT5 during the activation phase of the cycle, leading to recruitment of the positive transcription elongation factor b (P-TEFb) and BRD4, followed by productive elongation of circadian transcripts. Deacetylated by SIRT1, which may result in decreased protein stability. Post-translationally, phosphorylated upon dimerization with CLOCK. Phosphorylation enhances the transcriptional activity, alters the subcellular localization and decreases the stability of the CLOCK-BMAL1 heterodimer by promoting its degradation. Phosphorylation shows circadian variations in the liver with a peak between CT10 to CT14. Phosphorylation at Ser-90 by CK2 is essential for its nuclear localization, its interaction with CLOCK and controls CLOCK nuclear entry. Dephosphorylation at Ser-78 is important for dimerization with CLOCK and transcriptional activity. In terms of processing, sumoylated on Lys-259 upon dimerization with CLOCK. Predominantly conjugated to poly-SUMO2/3 rather than SUMO1 and the level of these conjugates undergo rhythmic variation, peaking at CT9-CT12. Sumoylation localizes it exclusively to the PML body and promotes its ubiquitination in the PML body, ubiquitin-dependent proteasomal degradation and the transcriptional activity of the CLOCK-BMAL1 heterodimer. Undergoes lysosome-mediated degradation in a time-dependent manner in the liver.

The protein localises to the nucleus. It is found in the cytoplasm. The protein resides in the PML body. In terms of biological role, transcriptional activator which forms a core component of the circadian clock. The circadian clock, an internal time-keeping system, regulates various physiological processes through the generation of approximately 24 hour circadian rhythms in gene expression, which are translated into rhythms in metabolism and behavior. It is derived from the Latin roots 'circa' (about) and 'diem' (day) and acts as an important regulator of a wide array of physiological functions including metabolism, sleep, body temperature, blood pressure, endocrine, immune, cardiovascular, and renal function. Consists of two major components: the central clock, residing in the suprachiasmatic nucleus (SCN) of the brain, and the peripheral clocks that are present in nearly every tissue and organ system. Both the central and peripheral clocks can be reset by environmental cues, also known as Zeitgebers (German for 'timegivers'). The predominant Zeitgeber for the central clock is light, which is sensed by retina and signals directly to the SCN. The central clock entrains the peripheral clocks through neuronal and hormonal signals, body temperature and feeding-related cues, aligning all clocks with the external light/dark cycle. Circadian rhythms allow an organism to achieve temporal homeostasis with its environment at the molecular level by regulating gene expression to create a peak of protein expression once every 24 hours to control when a particular physiological process is most active with respect to the solar day. Transcription and translation of core clock components (CLOCK, NPAS2, BMAL1, BMAL2, PER1, PER2, PER3, CRY1 and CRY2) plays a critical role in rhythm generation, whereas delays imposed by post-translational modifications (PTMs) are important for determining the period (tau) of the rhythms (tau refers to the period of a rhythm and is the length, in time, of one complete cycle). A diurnal rhythm is synchronized with the day/night cycle, while the ultradian and infradian rhythms have a period shorter and longer than 24 hours, respectively. Disruptions in the circadian rhythms contribute to the pathology of cardiovascular diseases, cancer, metabolic syndromes and aging. A transcription/translation feedback loop (TTFL) forms the core of the molecular circadian clock mechanism. Transcription factors, CLOCK or NPAS2 and BMAL1 or BMAL2, form the positive limb of the feedback loop, act in the form of a heterodimer and activate the transcription of core clock genes and clock-controlled genes (involved in key metabolic processes), harboring E-box elements (5'-CACGTG-3') within their promoters. The core clock genes: PER1/2/3 and CRY1/2 which are transcriptional repressors form the negative limb of the feedback loop and interact with the CLOCK|NPAS2-BMAL1|BMAL2 heterodimer inhibiting its activity and thereby negatively regulating their own expression. This heterodimer also activates nuclear receptors NR1D1/2 and RORA/B/G, which form a second feedback loop and which activate and repress BMAL1 transcription, respectively. BMAL1 positively regulates myogenesis and negatively regulates adipogenesis via the transcriptional control of the genes of the canonical Wnt signaling pathway. Plays a role in normal pancreatic beta-cell function; regulates glucose-stimulated insulin secretion via the regulation of antioxidant genes NFE2L2/NRF2 and its targets SESN2, PRDX3, CCLC and CCLM. Negatively regulates the mTORC1 signaling pathway; regulates the expression of MTOR and DEPTOR. Controls diurnal oscillations of Ly6C inflammatory monocytes; rhythmic recruitment of the PRC2 complex imparts diurnal variation to chemokine expression that is necessary to sustain Ly6C monocyte rhythms. Regulates the expression of HSD3B2, STAR, PTGS2, CYP11A1, CYP19A1 and LHCGR in the ovary and also the genes involved in hair growth. Plays an important role in adult hippocampal neurogenesis by regulating the timely entry of neural stem/progenitor cells (NSPCs) into the cell cycle and the number of cell divisions that take place prior to cell-cycle exit. Regulates the circadian expression of CIART and KLF11. The CLOCK-BMAL1 heterodimer regulates the circadian expression of SERPINE1/PAI1, VWF, B3, CCRN4L/NOC, NAMPT, DBP, MYOD1, PPARGC1A, PPARGC1B, SIRT1, GYS2, F7, NGFR, GNRHR, BHLHE40/DEC1, ATF4, MTA1, KLF10 and also genes implicated in glucose and lipid metabolism. Promotes rhythmic chromatin opening, regulating the DNA accessibility of other transcription factors. The NPAS2-BMAL1 heterodimer positively regulates the expression of MAOA, F7 and LDHA and modulates the circadian rhythm of daytime contrast sensitivity by regulating the rhythmic expression of adenylate cyclase type 1 (ADCY1) in the retina. The preferred binding motif for the CLOCK-BMAL1 heterodimer is 5'-CACGTGA-3', which contains a flanking adenine nucleotide at the 3-prime end of the canonical 6-nucleotide E-box sequence. CLOCK specifically binds to the half-site 5'-CAC-3', while BMAL1 binds to the half-site 5'-GTGA-3'. The CLOCK-BMAL1 heterodimer also recognizes the non-canonical E-box motifs 5'-AACGTGA-3' and 5'-CATGTGA-3'. Essential for the rhythmic interaction of CLOCK with ASS1 and plays a critical role in positively regulating CLOCK-mediated acetylation of ASS1. Plays a role in protecting against lethal sepsis by limiting the expression of immune checkpoint protein CD274 in macrophages in a PKM2-dependent manner. Regulates the diurnal rhythms of skeletal muscle metabolism via transcriptional activation of genes promoting triglyceride synthesis (DGAT2) and metabolic efficiency (COQ10B). This chain is Basic helix-loop-helix ARNT-like protein 1 (BMAL1), found in Mesocricetus auratus (Golden hamster).